Here is a 346-residue protein sequence, read N- to C-terminus: Holliday junction branch migration complex subunit RuvB (346 aa).

The interval 1–182 is large ATPase domain (RuvB-L); it reads MSEPARLISP…FGIPVRLTFY (182 aa). Residues Leu-21, Arg-22, Gly-63, Lys-66, Thr-67, Thr-68, 129–131, Arg-172, Tyr-182, and Arg-219 each bind ATP; that span reads EDY. Thr-67 is a binding site for Mg(2+). Residues 183–253 are small ATPAse domain (RuvB-S); sequence TVEELELIVR…IADEALTRLL (71 aa). The head domain (RuvB-H) stretch occupies residues 256–346; it reads NVGFDQLDKR…AQFRLFQEDD (91 aa). The DNA site is built by Arg-292, Arg-311, and Arg-316.

It belongs to the RuvB family. In terms of assembly, homohexamer. Forms an RuvA(8)-RuvB(12)-Holliday junction (HJ) complex. HJ DNA is sandwiched between 2 RuvA tetramers; dsDNA enters through RuvA and exits via RuvB. An RuvB hexamer assembles on each DNA strand where it exits the tetramer. Each RuvB hexamer is contacted by two RuvA subunits (via domain III) on 2 adjacent RuvB subunits; this complex drives branch migration. In the full resolvosome a probable DNA-RuvA(4)-RuvB(12)-RuvC(2) complex forms which resolves the HJ.

Its subcellular location is the cytoplasm. It catalyses the reaction ATP + H2O = ADP + phosphate + H(+). Functionally, the RuvA-RuvB-RuvC complex processes Holliday junction (HJ) DNA during genetic recombination and DNA repair, while the RuvA-RuvB complex plays an important role in the rescue of blocked DNA replication forks via replication fork reversal (RFR). RuvA specifically binds to HJ cruciform DNA, conferring on it an open structure. The RuvB hexamer acts as an ATP-dependent pump, pulling dsDNA into and through the RuvAB complex. RuvB forms 2 homohexamers on either side of HJ DNA bound by 1 or 2 RuvA tetramers; 4 subunits per hexamer contact DNA at a time. Coordinated motions by a converter formed by DNA-disengaged RuvB subunits stimulates ATP hydrolysis and nucleotide exchange. Immobilization of the converter enables RuvB to convert the ATP-contained energy into a lever motion, pulling 2 nucleotides of DNA out of the RuvA tetramer per ATP hydrolyzed, thus driving DNA branch migration. The RuvB motors rotate together with the DNA substrate, which together with the progressing nucleotide cycle form the mechanistic basis for DNA recombination by continuous HJ branch migration. Branch migration allows RuvC to scan DNA until it finds its consensus sequence, where it cleaves and resolves cruciform DNA. The sequence is that of Holliday junction branch migration complex subunit RuvB from Rhizobium etli (strain ATCC 51251 / DSM 11541 / JCM 21823 / NBRC 15573 / CFN 42).